We begin with the raw amino-acid sequence, 258 residues long: Snake venom serine protease 3 (258 aa).

Positions 1–18 (MVLIRVLANLLILQLSYA) are cleaved as a signal peptide. Residues 19 to 24 (QKSSEL) constitute a propeptide that is removed on maturation. In terms of domain architecture, Peptidase S1 spans 25 to 249 (VIGGDECNIN…YTDWIQSIIA (225 aa)). Cystine bridges form between C31/C163, C50/C66, C98/C256, C142/C210, C174/C189, and C200/C225. N44 is a glycosylation site (N-linked (GlcNAc...) asparagine). The Charge relay system role is filled by H65. Residue N103 is glycosylated (N-linked (GlcNAc...) asparagine). Catalysis depends on D110, which acts as the Charge relay system. N-linked (GlcNAc...) asparagine glycans are attached at residues N117, N121, and N154. S204 (charge relay system) is an active-site residue. An N-linked (GlcNAc...) asparagine glycan is attached at N251.

The protein belongs to the peptidase S1 family. Snake venom subfamily. As to quaternary structure, monomer. As to expression, expressed by the venom gland.

The protein resides in the secreted. Its function is as follows. Snake venom serine protease that may act in the hemostasis system of the prey. The polypeptide is Snake venom serine protease 3 (TLG3) (Craspedocephalus gramineus (Bamboo pit viper)).